A 235-amino-acid polypeptide reads, in one-letter code: Phosphoribosylaminoimidazole-succinocarboxamide synthase (235 aa).

This sequence belongs to the SAICAR synthetase family.

The catalysed reaction is 5-amino-1-(5-phospho-D-ribosyl)imidazole-4-carboxylate + L-aspartate + ATP = (2S)-2-[5-amino-1-(5-phospho-beta-D-ribosyl)imidazole-4-carboxamido]succinate + ADP + phosphate + 2 H(+). The protein operates within purine metabolism; IMP biosynthesis via de novo pathway; 5-amino-1-(5-phospho-D-ribosyl)imidazole-4-carboxamide from 5-amino-1-(5-phospho-D-ribosyl)imidazole-4-carboxylate: step 1/2. The sequence is that of Phosphoribosylaminoimidazole-succinocarboxamide synthase from Streptococcus pneumoniae (strain JJA).